The following is a 157-amino-acid chain: AP-1 complex subunit sigma-2 (157 aa).

The protein belongs to the adaptor complexes small subunit family. In terms of assembly, adaptor protein complex 1 (AP-1) is a heterotetramer composed of two large adaptins (gamma-type subunit AP1G1 and beta-type subunit AP1B1), a medium adaptin (mu-type subunit AP1M1 or AP1M2) and a small adaptin (sigma-type subunit AP1S1 or AP1S2 or AP1S3). Binds to MUC1. As to expression, widely expressed.

Its subcellular location is the golgi apparatus. It is found in the cytoplasmic vesicle membrane. The protein resides in the membrane. The protein localises to the clathrin-coated pit. In terms of biological role, subunit of clathrin-associated adaptor protein complex 1 that plays a role in protein sorting in the late-Golgi/trans-Golgi network (TGN) and/or endosomes. The AP complexes mediate both the recruitment of clathrin to membranes and the recognition of sorting signals within the cytosolic tails of transmembrane cargo molecules. The protein is AP-1 complex subunit sigma-2 (AP1S2) of Homo sapiens (Human).